We begin with the raw amino-acid sequence, 273 residues long: Large ribosomal subunit protein uL2 (273 aa).

Residues 228-273 (VDHPHGGGEGKTSGGRHPVTPWGFPTKGKKTRKNKRTSKFIVKKRK) form a disordered region. Positions 254-273 (KGKKTRKNKRTSKFIVKKRK) are enriched in basic residues.

The protein belongs to the universal ribosomal protein uL2 family. As to quaternary structure, part of the 50S ribosomal subunit. Forms a bridge to the 30S subunit in the 70S ribosome.

One of the primary rRNA binding proteins. Required for association of the 30S and 50S subunits to form the 70S ribosome, for tRNA binding and peptide bond formation. It has been suggested to have peptidyltransferase activity; this is somewhat controversial. Makes several contacts with the 16S rRNA in the 70S ribosome. The chain is Large ribosomal subunit protein uL2 from Rickettsia rickettsii (strain Iowa).